We begin with the raw amino-acid sequence, 258 residues long: Polysialic acid transport protein KpsM (258 aa).

The Cytoplasmic segment spans residues 1-30; the sequence is MARSGFEVQKVTVEALFLREIRTRFGKFRL. The 222-residue stretch at 30–251 folds into the ABC transmembrane type-2 domain; it reads LGYLWAILEP…FIGLALYRTR (222 aa). The chain crosses the membrane as a helical span at residues 31-54; that stretch reads GYLWAILEPSAHLLILLGILGYVM. At 55-61 the chain is on the periplasmic side; it reads HRTMPDI. A helical membrane pass occupies residues 62-81; that stretch reads SFPVFLLNGLIPFFIFSSIS. Residues 82–108 lie on the Cytoplasmic side of the membrane; that stretch reads KRSIGAIEANQGLFNYRPVKPIDTIIA. The chain crosses the membrane as a helical span at residues 109-132; that stretch reads RALLETLIYVAVYILLMLIVWMTG. Topologically, residues 133 to 143 are periplasmic; sequence EYFEITNFLQL. A helical membrane pass occupies residues 144–165; it reads VLTWSLLIILSCGVGLIFMVVG. The Cytoplasmic segment spans residues 166–174; it reads KTFPEMQKV. Residues 175 to 195 form a helical membrane-spanning segment; the sequence is LPILLKPLYFISCIMFPLHSI. Topologically, residues 196 to 226 are periplasmic; sequence PKQYWSYLLWNPLVHVVELSREAVMPGYISE. The helical transmembrane segment at 227 to 247 threads the bilayer; it reads GVSLNYLAMFTLVTLFIGLAL. Residues 248–258 are Cytoplasmic-facing; the sequence is YRTREEAMLTS.

The protein belongs to the ABC-2 integral membrane protein family.

The protein resides in the cell inner membrane. KpsM and KpsT constitute a system for the transport of polysialic acid across the cytoplasmic membrane. This chain is Polysialic acid transport protein KpsM (kpsM), found in Escherichia coli.